The sequence spans 468 residues: Peroxisome proliferator-activated receptor alpha (468 aa).

The tract at residues 1–20 (MVDTESQICPLSPFGDDDLE) is disordered. Residues 99-173 (NIECRICGDK…DGMSHNAIRF (75 aa)) constitute a DNA-binding region (nuclear receptor). 2 consecutive NR C4-type zinc fingers follow at residues 102–122 (CRIC…CEGC) and 139–161 (CDRS…FQKC). In terms of domain architecture, NR LBD spans 239 to 466 (FVIHDMETLC…HPLLQEIYRD (228 aa)). The required for heterodimerization with RXRA stretch occupies residues 304–433 (DQVTLLKYGV…PKLLQKMADL (130 aa)).

Belongs to the nuclear hormone receptor family. NR1 subfamily. Heterodimer; with RXRA. This heterodimerization is required for DNA binding and transactivation activity. Interacts with NCOA3 coactivator. Interacts with CITED2; the interaction stimulates its transcriptional activity. Also interacts with PPARBP in vitro. Interacts with AKAP13, LPIN1, PRDM16 and coactivator NCOA6. Interacts with ASXL1 and ASXL2. Interacts with PER2. Interacts with SIRT1; the interaction seems to be modulated by NAD(+) levels. Interacts with CRY1 and CRY2. In hepatocytes, interacts with PAQR3 and HUWE1; the interactions promote PPARA poylubiquitination and HUWE1-mediated degradation. Ubiquitinated by E3 ubiquitin-protein ligase HUWE1; leading to proteasomal degradation. Post-translationally, phosphorylated.

The protein resides in the nucleus. Its function is as follows. Ligand-activated transcription factor. Key regulator of lipid metabolism. Activated by the endogenous ligand 1-palmitoyl-2-oleoyl-sn-glycerol-3-phosphocholine (16:0/18:1-GPC). Activated by oleylethanolamide, a naturally occurring lipid that regulates satiety. Receptor for peroxisome proliferators such as hypolipidemic drugs and fatty acids. Regulates the peroxisomal beta-oxidation pathway of fatty acids. Functions as a transcription activator for the ACOX1 and P450 genes. Transactivation activity requires heterodimerization with RXRA and is antagonized by NR2C2. May be required for the propagation of clock information to metabolic pathways regulated by PER2. The protein is Peroxisome proliferator-activated receptor alpha (PPARA) of Phascolarctos cinereus (Koala).